We begin with the raw amino-acid sequence, 409 residues long: Ribose-phosphate pyrophosphokinase 1 (409 aa).

Mg(2+)-binding residues include Asp128, His130, and Asp143. The residue at position 199 (Ser199) is a Phosphoserine.

This sequence belongs to the ribose-phosphate pyrophosphokinase family.

It localises to the cytoplasm. The catalysed reaction is D-ribose 5-phosphate + ATP = 5-phospho-alpha-D-ribose 1-diphosphate + AMP + H(+). Its pathway is metabolic intermediate biosynthesis; 5-phospho-alpha-D-ribose 1-diphosphate biosynthesis; 5-phospho-alpha-D-ribose 1-diphosphate from D-ribose 5-phosphate (route I): step 1/1. In terms of biological role, 5-phosphoribose 1-diphosphate synthase involved in nucleotide, histidine, and tryptophan biosynthesis. Active in heteromultimeric complexes with other 5-phosphoribose 1-diphosphate synthases. This is Ribose-phosphate pyrophosphokinase 1 from Schizosaccharomyces pombe (strain 972 / ATCC 24843) (Fission yeast).